The primary structure comprises 303 residues: Pyridoxal 5'-phosphate synthase subunit PdxS (303 aa).

Residue Asp-33 coordinates D-ribose 5-phosphate. Catalysis depends on Lys-90, which acts as the Schiff-base intermediate with D-ribose 5-phosphate. Gly-162 serves as a coordination point for D-ribose 5-phosphate. Position 174 (Arg-174) interacts with D-glyceraldehyde 3-phosphate. D-ribose 5-phosphate-binding positions include Gly-223 and 244–245 (GS).

This sequence belongs to the PdxS/SNZ family. In the presence of PdxT, forms a dodecamer of heterodimers.

The enzyme catalyses aldehydo-D-ribose 5-phosphate + D-glyceraldehyde 3-phosphate + L-glutamine = pyridoxal 5'-phosphate + L-glutamate + phosphate + 3 H2O + H(+). Its pathway is cofactor biosynthesis; pyridoxal 5'-phosphate biosynthesis. In terms of biological role, catalyzes the formation of pyridoxal 5'-phosphate from ribose 5-phosphate (RBP), glyceraldehyde 3-phosphate (G3P) and ammonia. The ammonia is provided by the PdxT subunit. Can also use ribulose 5-phosphate and dihydroxyacetone phosphate as substrates, resulting from enzyme-catalyzed isomerization of RBP and G3P, respectively. This chain is Pyridoxal 5'-phosphate synthase subunit PdxS, found in Mycolicibacterium smegmatis (strain ATCC 700084 / mc(2)155) (Mycobacterium smegmatis).